The following is a 200-amino-acid chain: Probable nicotinate-nucleotide adenylyltransferase (200 aa).

Belongs to the NadD family.

The enzyme catalyses nicotinate beta-D-ribonucleotide + ATP + H(+) = deamido-NAD(+) + diphosphate. Its pathway is cofactor biosynthesis; NAD(+) biosynthesis; deamido-NAD(+) from nicotinate D-ribonucleotide: step 1/1. Catalyzes the reversible adenylation of nicotinate mononucleotide (NaMN) to nicotinic acid adenine dinucleotide (NaAD). In Clostridium tetani (strain Massachusetts / E88), this protein is Probable nicotinate-nucleotide adenylyltransferase.